A 279-amino-acid chain; its full sequence is 3-methyl-2-oxobutanoate hydroxymethyltransferase (279 aa).

D49 and D88 together coordinate Mg(2+). 3-methyl-2-oxobutanoate is bound by residues 49–50 (DS), D88, and K118. A Mg(2+)-binding site is contributed by E120. The active-site Proton acceptor is the E187.

This sequence belongs to the PanB family. As to quaternary structure, homodecamer; pentamer of dimers. Requires Mg(2+) as cofactor.

Its subcellular location is the cytoplasm. It carries out the reaction 3-methyl-2-oxobutanoate + (6R)-5,10-methylene-5,6,7,8-tetrahydrofolate + H2O = 2-dehydropantoate + (6S)-5,6,7,8-tetrahydrofolate. The protein operates within cofactor biosynthesis; (R)-pantothenate biosynthesis; (R)-pantoate from 3-methyl-2-oxobutanoate: step 1/2. Functionally, catalyzes the reversible reaction in which hydroxymethyl group from 5,10-methylenetetrahydrofolate is transferred onto alpha-ketoisovalerate to form ketopantoate. In Agrobacterium fabrum (strain C58 / ATCC 33970) (Agrobacterium tumefaciens (strain C58)), this protein is 3-methyl-2-oxobutanoate hydroxymethyltransferase.